A 254-amino-acid polypeptide reads, in one-letter code: 5-oxoprolinase subunit A (254 aa).

It belongs to the LamB/PxpA family. In terms of assembly, forms a complex composed of PxpA, PxpB and PxpC.

It carries out the reaction 5-oxo-L-proline + ATP + 2 H2O = L-glutamate + ADP + phosphate + H(+). In terms of biological role, catalyzes the cleavage of 5-oxoproline to form L-glutamate coupled to the hydrolysis of ATP to ADP and inorganic phosphate. The protein is 5-oxoprolinase subunit A of Carboxydothermus hydrogenoformans (strain ATCC BAA-161 / DSM 6008 / Z-2901).